The following is a 383-amino-acid chain: Putative type I specificity subunit S.MgeORF438P (383 aa).

Positions 1 to 142 (MTPKLKLNNN…KELEIPFTSN (142 aa)) are TRD1. A conserved region 1 region spans residues 143–182 (KNEQHAIANTLSVFDERLENLASLIEINRKLRDEYAHKLF). The stretch at 143-182 (KNEQHAIANTLSVFDERLENLASLIEINRKLRDEYAHKLF) forms a coiled coil. The TRD2 stretch occupies residues 183–330 (SLDEAFLSHW…GEIKVPYVKS (148 aa)). Residues 331-370 (FQLQRKAGKIVFLLDQKLDQYKKELSSLTVIRDTLLKKLF) are conserved region 2. The stretch at 331 to 370 (FQLQRKAGKIVFLLDQKLDQYKKELSSLTVIRDTLLKKLF) forms a coiled coil.

This sequence belongs to the type-I restriction system S methylase family.

Functionally, the specificity (S) subunit of a type I restriction enzyme; this subunit dictates DNA sequence specificity. This bacterium does not encode the associated endonuclease or methylase subunits. In Mycoplasma genitalium (strain ATCC 33530 / DSM 19775 / NCTC 10195 / G37) (Mycoplasmoides genitalium), this protein is Putative type I specificity subunit S.MgeORF438P.